Consider the following 150-residue polypeptide: Cilia- and flagella-associated protein 68 (150 aa).

Mn regions lie at residues 99 to 110 (TTYDTSYNNKMP) and 140 to 150 (KSTYMNSYSKS).

This sequence belongs to the CFAP68 family. Microtubule inner protein component of sperm flagellar doublet microtubules.

It is found in the cytoplasm. The protein resides in the cytoskeleton. The protein localises to the cilium axoneme. It localises to the flagellum axoneme. Its subcellular location is the nucleus. It is found in the cell projection. The protein resides in the cilium. In terms of biological role, microtubule inner protein (MIP) part of the dynein-decorated doublet microtubules (DMTs) in cilia axoneme, which is required for motile cilia beating. The chain is Cilia- and flagella-associated protein 68 (CFAP68) from Macaca fascicularis (Crab-eating macaque).